A 279-amino-acid chain; its full sequence is Large ribosomal subunit protein mL46 (279 aa).

Residue K230 is modified to N6-acetyllysine.

This sequence belongs to the mitochondrion-specific ribosomal protein mL46 family. As to quaternary structure, component of the mitochondrial large ribosomal subunit (mt-LSU). Mature mammalian 55S mitochondrial ribosomes consist of a small (28S) and a large (39S) subunit. The 28S small subunit contains a 12S ribosomal RNA (12S mt-rRNA) and 30 different proteins. The 39S large subunit contains a 16S rRNA (16S mt-rRNA), a copy of mitochondrial valine transfer RNA (mt-tRNA(Val)), which plays an integral structural role, and 52 different proteins. mL46 is located at the central protuberance.

It is found in the mitochondrion. This chain is Large ribosomal subunit protein mL46 (MRPL46), found in Homo sapiens (Human).